The primary structure comprises 87 residues: Large ribosomal subunit protein eL31 (87 aa).

It belongs to the eukaryotic ribosomal protein eL31 family.

This chain is Large ribosomal subunit protein eL31, found in Methanocorpusculum labreanum (strain ATCC 43576 / DSM 4855 / Z).